Here is a 313-residue protein sequence, read N- to C-terminus: Small ribosomal subunit protein uS2 (313 aa).

Residues 233-256 show a composition bias toward basic and acidic residues; the sequence is RTMTDKQSDVAKEAKADGKEEAPK. Positions 233-293 are disordered; it reads RTMTDKQSDV…SRKLVAAGTA (61 aa).

This sequence belongs to the universal ribosomal protein uS2 family.

The protein is Small ribosomal subunit protein uS2 of Bdellovibrio bacteriovorus (strain ATCC 15356 / DSM 50701 / NCIMB 9529 / HD100).